Reading from the N-terminus, the 249-residue chain is Homeobox-leucine zipper protein HOX6 (249 aa).

The segment at 1-32 is disordered; that stretch reads MDGEEDSEWMMMDVGGKGGKGGGGGGAADRKK. Residues 15–27 are compositionally biased toward gly residues; sequence GGKGGKGGGGGGA. The homeobox DNA-binding region spans 27-86; that stretch reads AADRKKRFSEEQIKSLESMFATQTKLEPRQKLQLARELGLQPRQVAIWFQNKRARWKSKQ. A leucine-zipper region spans residues 85-129; that stretch reads KQLEREYSALRDDYDALLCSYESLKKEKLALIKQLEKLAEMLQEP. Residues 194–249 are disordered; sequence FLRPSSQHHPPPPHAGAGFTSSEPAADHQSFNFHSSWPSSTEQTCSSTPWWEFESE. Positions 212–242 are enriched in polar residues; the sequence is FTSSEPAADHQSFNFHSSWPSSTEQTCSSTP.

It belongs to the HD-ZIP homeobox family. Class I subfamily. Expressed in seedlings, roots, leaves, nodes, internodes, flowers and embryo.

It localises to the nucleus. Functionally, probable transcription factor that binds to the DNA sequence 5'-CAAT[AT]ATTG-3'. This is Homeobox-leucine zipper protein HOX6 (HOX6) from Oryza sativa subsp. indica (Rice).